A 196-amino-acid chain; its full sequence is dTTP/UTP pyrophosphatase (196 aa).

The Proton acceptor role is filled by aspartate 77.

It belongs to the Maf family. YhdE subfamily. A divalent metal cation serves as cofactor.

Its subcellular location is the cytoplasm. The catalysed reaction is dTTP + H2O = dTMP + diphosphate + H(+). It carries out the reaction UTP + H2O = UMP + diphosphate + H(+). In terms of biological role, nucleoside triphosphate pyrophosphatase that hydrolyzes dTTP and UTP. May have a dual role in cell division arrest and in preventing the incorporation of modified nucleotides into cellular nucleic acids. The sequence is that of dTTP/UTP pyrophosphatase from Christiangramia forsetii (strain DSM 17595 / CGMCC 1.15422 / KT0803) (Gramella forsetii).